An 855-amino-acid chain; its full sequence is DNA mismatch repair protein MutS (855 aa).

Residue 613-620 (GPNMGGKS) coordinates ATP. Positions 796-816 (TTSLPHEMPSQQSGKPASPMQ) are disordered.

This sequence belongs to the DNA mismatch repair MutS family.

This protein is involved in the repair of mismatches in DNA. It is possible that it carries out the mismatch recognition step. This protein has a weak ATPase activity. The polypeptide is DNA mismatch repair protein MutS (Pseudomonas aeruginosa (strain ATCC 15692 / DSM 22644 / CIP 104116 / JCM 14847 / LMG 12228 / 1C / PRS 101 / PAO1)).